Consider the following 134-residue polypeptide: T-cell receptor beta chain V region CTL-F3 (134 aa).

The N-terminal stretch at 1–19 (MAPRLLFCLVLCFLRAEPT) is a signal peptide. The v segment stretch occupies residues 20–115 (NAGVIQTPRH…SAVYLCASSL (96 aa)). A disulfide bridge connects residues Cys-42 and Cys-111. Asn-90 is a glycosylation site (N-linked (GlcNAc...) asparagine). The segment at 116–119 (STGV) is d segment. The j segment stretch occupies residues 120-134 (SYEQYFGPGTRLTVL).

This is T-cell receptor beta chain V region CTL-F3 from Mus musculus (Mouse).